Reading from the N-terminus, the 726-residue chain is Catalase-peroxidase (726 aa).

A cross-link (tryptophyl-tyrosyl-methioninium (Trp-Tyr) (with M-240)) is located at residues 91-214 (WHSAGTYRIA…LGAVQMGLIY (124 aa)). H92 acts as the Proton acceptor in catalysis. The tryptophyl-tyrosyl-methioninium (Tyr-Met) (with W-91) cross-link spans 214 to 240 (YVNPEGPNGNPDPLAAARDIRETFARM). Position 255 (H255) interacts with heme b. The segment at 335–362 (AHQWRPKAGAGADSVPDPHDPNKRRTPS) is disordered.

Belongs to the peroxidase family. Peroxidase/catalase subfamily. As to quaternary structure, homodimer or homotetramer. It depends on heme b as a cofactor. Formation of the three residue Trp-Tyr-Met cross-link is important for the catalase, but not the peroxidase activity of the enzyme.

The catalysed reaction is H2O2 + AH2 = A + 2 H2O. It carries out the reaction 2 H2O2 = O2 + 2 H2O. Its function is as follows. Bifunctional enzyme with both catalase and broad-spectrum peroxidase activity. In Pseudomonas fluorescens (strain ATCC BAA-477 / NRRL B-23932 / Pf-5), this protein is Catalase-peroxidase.